The sequence spans 525 residues: Light-independent protochlorophyllide reductase subunit B (525 aa).

D36 serves as a coordination point for [4Fe-4S] cluster. D286 acts as the Proton donor in catalysis. 421 to 422 (GL) contributes to the substrate binding site.

The protein belongs to the ChlB/BchB/BchZ family. Protochlorophyllide reductase is composed of three subunits; ChlL, ChlN and ChlB. Forms a heterotetramer of two ChlB and two ChlN subunits. [4Fe-4S] cluster serves as cofactor.

It carries out the reaction chlorophyllide a + oxidized 2[4Fe-4S]-[ferredoxin] + 2 ADP + 2 phosphate = protochlorophyllide a + reduced 2[4Fe-4S]-[ferredoxin] + 2 ATP + 2 H2O. It functions in the pathway porphyrin-containing compound metabolism; chlorophyll biosynthesis (light-independent). In terms of biological role, component of the dark-operative protochlorophyllide reductase (DPOR) that uses Mg-ATP and reduced ferredoxin to reduce ring D of protochlorophyllide (Pchlide) to form chlorophyllide a (Chlide). This reaction is light-independent. The NB-protein (ChlN-ChlB) is the catalytic component of the complex. This chain is Light-independent protochlorophyllide reductase subunit B, found in Prochlorococcus marinus (strain NATL2A).